Consider the following 217-residue polypeptide: ATP-dependent Clp protease proteolytic subunit (217 aa).

Catalysis depends on serine 121, which acts as the Nucleophile. Histidine 146 is a catalytic residue.

It belongs to the peptidase S14 family. As to quaternary structure, fourteen ClpP subunits assemble into 2 heptameric rings which stack back to back to give a disk-like structure with a central cavity, resembling the structure of eukaryotic proteasomes.

The protein resides in the cytoplasm. It catalyses the reaction Hydrolysis of proteins to small peptides in the presence of ATP and magnesium. alpha-casein is the usual test substrate. In the absence of ATP, only oligopeptides shorter than five residues are hydrolyzed (such as succinyl-Leu-Tyr-|-NHMec, and Leu-Tyr-Leu-|-Tyr-Trp, in which cleavage of the -Tyr-|-Leu- and -Tyr-|-Trp bonds also occurs).. Its function is as follows. Cleaves peptides in various proteins in a process that requires ATP hydrolysis. Has a chymotrypsin-like activity. Plays a major role in the degradation of misfolded proteins. The protein is ATP-dependent Clp protease proteolytic subunit of Burkholderia cenocepacia (strain HI2424).